Reading from the N-terminus, the 214-residue chain is Pyrrolidone-carboxylate peptidase (214 aa).

Residues Glu-80, Cys-143, and His-166 contribute to the active site.

The protein belongs to the peptidase C15 family. In terms of assembly, homotetramer.

It localises to the cytoplasm. The enzyme catalyses Release of an N-terminal pyroglutamyl group from a polypeptide, the second amino acid generally not being Pro.. Functionally, removes 5-oxoproline from various penultimate amino acid residues except L-proline. This is Pyrrolidone-carboxylate peptidase from Escherichia fergusonii (strain ATCC 35469 / DSM 13698 / CCUG 18766 / IAM 14443 / JCM 21226 / LMG 7866 / NBRC 102419 / NCTC 12128 / CDC 0568-73).